The following is a 340-amino-acid chain: Arginase 1, mitochondrial (340 aa).

The N-terminal 24 residues, 1 to 24 (MGGVAAGTRWIHHVRRLSAAKVSA), are a transit peptide targeting the mitochondrion. His-159, Asp-183, His-185, and Asp-187 together coordinate Mn(2+). Substrate is bound by residues 185-189 (HPDIY) and 193-195 (EGN). Positions 268 and 270 each coordinate Mn(2+). Residue Glu-311 participates in substrate binding.

This sequence belongs to the arginase family. Mn(2+) serves as cofactor.

The protein localises to the mitochondrion. The catalysed reaction is L-arginine + H2O = urea + L-ornithine. It participates in nitrogen metabolism; urea cycle; L-ornithine and urea from L-arginine: step 1/1. Functionally, catalyzes the hydrolysis of L-arginine to urea and L-ornithine. The latter can be utilized in the urea cycle or as a precursor for the synthesis of both polyamines and proline. The protein is Arginase 1, mitochondrial (ARG1) of Oryza sativa subsp. japonica (Rice).